A 604-amino-acid polypeptide reads, in one-letter code: Netrin-1 (604 aa).

A signal peptide spans 1–24; the sequence is MMRAVWEALAALAAVACLVGAVRG. A Laminin N-terminal domain is found at 47–284; it reads HPRRCIPDFV…AVSDLQVGGR (238 aa). N-linked (GlcNAc...) asparagine glycans are attached at residues Asn-95, Asn-116, and Asn-131. 15 disulfide bridges follow: Cys-119/Cys-152, Cys-285/Cys-294, Cys-287/Cys-304, Cys-306/Cys-315, Cys-318/Cys-338, Cys-341/Cys-350, Cys-343/Cys-368, Cys-371/Cys-380, Cys-383/Cys-401, Cys-404/Cys-416, Cys-406/Cys-423, Cys-425/Cys-434, Cys-437/Cys-451, Cys-472/Xaa-544, and Cys-491/Cys-601. 3 consecutive Laminin EGF-like domains span residues 285-340, 341-403, and 404-453; these read CKCN…ECVA, CNCN…ACKA, and CDCH…PCIK. N-linked (GlcNAc...) asparagine glycosylation occurs at Asn-417. Positions 472–601 constitute an NTR domain; that stretch reads CDSYCKASKG…FQQREKKGKC (130 aa). The short motif at 530 to 532 is the Cell attachment site element; sequence RGD.

Binds to its receptors; DCC, UNC5A, UNC5B, UNC5C and probably UNC5D. Binds to its receptor; DSCAM. Interacts with APP.

The protein localises to the secreted. It localises to the cytoplasm. In terms of biological role, netrins control guidance of CNS commissural axons and peripheral motor axons. Its association with either DCC or some UNC5 receptors will lead to axon attraction or repulsion, respectively. Binding to UNC5C might cause dissociation of UNC5C from polymerized TUBB3 in microtubules and thereby lead to increased microtubule dynamics and axon repulsion. Involved in dorsal root ganglion axon projection towards the spinal cord. It also serves as a survival factor via its association with its receptors which prevent the initiation of apoptosis. Involved in colorectal tumorigenesis by regulating apoptosis. This chain is Netrin-1 (Ntn1), found in Rattus norvegicus (Rat).